A 310-amino-acid polypeptide reads, in one-letter code: Phosphoribosylaminoimidazole-succinocarboxamide synthase (310 aa).

Belongs to the SAICAR synthetase family.

The catalysed reaction is 5-amino-1-(5-phospho-D-ribosyl)imidazole-4-carboxylate + L-aspartate + ATP = (2S)-2-[5-amino-1-(5-phospho-beta-D-ribosyl)imidazole-4-carboxamido]succinate + ADP + phosphate + 2 H(+). Its pathway is purine metabolism; IMP biosynthesis via de novo pathway; 5-amino-1-(5-phospho-D-ribosyl)imidazole-4-carboxamide from 5-amino-1-(5-phospho-D-ribosyl)imidazole-4-carboxylate: step 1/2. This is Phosphoribosylaminoimidazole-succinocarboxamide synthase from Xanthomonas oryzae pv. oryzae (strain MAFF 311018).